A 1465-amino-acid chain; its full sequence is Transcriptional elongation regulator MINIYO (1465 aa).

Disordered regions lie at residues 27–85, 186–211, and 1113–1135; these read KGIS…AEER, LNAS…ESDI, and TIHE…SSTI.

It belongs to the RPAP1 family. As to quaternary structure, interacts with HAG3, NRPB3 and NRPB10L. As to expression, expressed in root and shoot apices and in leaf and flower primordia. Detected in the endosperm, embryo, meristems and in organ primordia, but not in mature cells. Found exclusively in the vascular bundles in mature leaves.

The protein localises to the cytoplasm. The protein resides in the nucleus. Functionally, positive regulator of transcriptional elongation that is essential for cells to initiate differentiation. Interacts with RNA polymerase II and the Elongator complex and is required to sustain global levels of transcriptional elongation activity, specifically in differentiating tissues. The protein is Transcriptional elongation regulator MINIYO of Arabidopsis thaliana (Mouse-ear cress).